The sequence spans 517 residues: Acetylcholine receptor subunit delta (517 aa).

The signal sequence occupies residues 1-21; the sequence is MEGPVLTLGLLAALAVCGSWG. Over 22-245 the chain is Extracellular; sequence LNEEERLIRH…ITFYLIIRRK (224 aa). Asn-97 and Asn-164 each carry an N-linked (GlcNAc...) asparagine glycan. Cys-151 and Cys-165 are disulfide-bonded. A run of 3 helical transmembrane segments spans residues 246-270, 278-299, and 312-333; these read PLFY…VFYL, TSVA…SKRL, and FLLF…VLNI. Topologically, residues 334–471 are cytoplasmic; that stretch reads HFRTPSTHVL…WNRVARTVDR (138 aa). The residue at position 390 (Tyr-390) is a Phosphotyrosine; by Tyr-kinases. A helical transmembrane segment spans residues 472-490; sequence LCLFVVTPVMVVGTAWIFL.

This sequence belongs to the ligand-gated ion channel (TC 1.A.9) family. Acetylcholine receptor (TC 1.A.9.1) subfamily. Delta/CHRND sub-subfamily. In terms of assembly, pentamer of two alpha chains, and one each of the beta, delta, and gamma (in immature muscle) or epsilon (in mature muscle) chains. The muscle heteropentamer composed of alpha-1, beta-1, delta, epsilon subunits interacts with the alpha-conotoxin ImII.

It is found in the postsynaptic cell membrane. It localises to the cell membrane. It carries out the reaction K(+)(in) = K(+)(out). The enzyme catalyses Na(+)(in) = Na(+)(out). Its function is as follows. After binding acetylcholine, the AChR responds by an extensive change in conformation that affects all subunits and leads to opening of an ion-conducting channel across the plasma membrane. This Homo sapiens (Human) protein is Acetylcholine receptor subunit delta.